Here is a 229-residue protein sequence, read N- to C-terminus: MEAVAKYDFKATADDELSFKRGDILKVLNEECDQNWYKAELNGKDGFIPKNYIEMKPHPWFFGKIPRAKAEEMLGKQRHDGAFLIRESESAPGDFSLSVKFGNDVQHFKVLRDGAGKYFLWVVKFNSLNELVDYHRSTSVSRNQQIFLRDIEQVPQVHGGDRATNLLQQPTYVQALFDFDPQEDGELGFRRGDFIQVVDNSDPNWWKGTCLGQTGMFPRNYVTPVNRNM.

2 SH3 domains span residues 1–58 (MEAV…MKPH) and 168–227 (QQPT…PVNR). The region spanning 60–171 (WFFGKIPRAK…RATNLLQQPT (112 aa)) is the SH2 domain.

It is found in the nucleus. Its subcellular location is the cytoplasm. The protein resides in the endosome. It localises to the golgi apparatus. Adapter protein that provides a critical link between cell surface growth factor receptors and the Ras signaling pathway. Promotes meiotic reinitiation during oocyte maturation. The protein is Growth factor receptor-bound protein 2 of Xenopus tropicalis (Western clawed frog).